A 372-amino-acid chain; its full sequence is C-X-C chemokine receptor type 5 (372 aa).

The Extracellular segment spans residues 1-55; it reads MNYPLTLEMDLENLEDLFWELDRLDNYNDTSLVENHLCPATEGPLMASFKAVFVP. N-linked (GlcNAc...) asparagine glycosylation is present at Asn28. The chain crosses the membrane as a helical span at residues 56–76; it reads VAYSLIFLLGVIGNVLVLVIL. Residues 77 to 88 are Cytoplasmic-facing; that stretch reads ERHRQTRSSTET. A helical transmembrane segment spans residues 89–109; the sequence is FLFHLAVADLLLVFILPFAVA. Residues 110–124 are Extracellular-facing; it reads EGSVGWVLGTFLCKT. Cys122 and Cys202 form a disulfide bridge. Residues 125 to 145 traverse the membrane as a helical segment; that stretch reads VIALHKVNFYCSSLLLACIAV. The Cytoplasmic portion of the chain corresponds to 146 to 167; it reads DRYLAIVHAVHAYRHRRLLSIH. A helical membrane pass occupies residues 168–188; it reads ITCGTIWLVGFLLALPEILFA. At 189–219 the chain is on the extracellular side; it reads KVSQGHHNNSLPRCTFSQENQAETHAWFTSR. Asn196 carries an N-linked (GlcNAc...) asparagine glycan. A helical transmembrane segment spans residues 220-240; the sequence is FLYHVAGFLLPMLVMGWCYVG. Topologically, residues 241 to 259 are cytoplasmic; the sequence is VVHRLRQAQRRPQRQKAVR. The chain crosses the membrane as a helical span at residues 260–280; sequence VAILVTSIFFLCWSPYHIVIF. Topologically, residues 281 to 304 are extracellular; it reads LDTLARLKAVDNTCKLNGSLPVAI. The helical transmembrane segment at 305–325 threads the bilayer; that stretch reads TMCEFLGLAHCCLNPMLYTFA. Over 326-372 the chain is Cytoplasmic; it reads GVKFRSDLSRLLTKLGCTGPASLCQLFPSWRRSSLSESENATSLTTF.

Belongs to the G-protein coupled receptor 1 family. As to expression, expression in mature B-cells and Burkitt lymphoma cells.

It localises to the cell membrane. Its function is as follows. Cytokine receptor that binds to B-lymphocyte chemoattractant (BLC). Involved in B-cell migration into B-cell follicles of spleen and Peyer patches but not into those of mesenteric or peripheral lymph nodes. May have a regulatory function in Burkitt lymphoma (BL) lymphomagenesis and/or B-cell differentiation. This chain is C-X-C chemokine receptor type 5 (CXCR5), found in Homo sapiens (Human).